The primary structure comprises 256 residues: uncharacterized protein (256 aa).

This is an uncharacterized protein from Bacillus subtilis (strain 168).